Reading from the N-terminus, the 277-residue chain is Cell division protein ZipA (277 aa).

The Periplasmic segment spans residues 1–5 (MQDLR). A helical transmembrane segment spans residues 6 to 26 (LMLLLFGVITIIVLFLHGVWA). Over 27 to 277 (RRKERSALFY…NALIRSTPHL (251 aa)) the chain is Cytoplasmic. The disordered stretch occupies residues 120–139 (QKKSDDLSHQSKETHHPSIQ).

The protein belongs to the ZipA family. As to quaternary structure, interacts with FtsZ via their C-terminal domains.

It localises to the cell inner membrane. In terms of biological role, essential cell division protein that stabilizes the FtsZ protofilaments by cross-linking them and that serves as a cytoplasmic membrane anchor for the Z ring. Also required for the recruitment to the septal ring of downstream cell division proteins. This is Cell division protein ZipA from Hamiltonella defensa subsp. Acyrthosiphon pisum (strain 5AT).